Consider the following 333-residue polypeptide: Lipoyl synthase (333 aa).

Residues 1 to 29 form a disordered region; it reads MTDSASGASAVANIATPSNEPYDATRKQK. Residues Cys80, Cys85, Cys91, Cys106, Cys110, Cys113, and Ser320 each contribute to the [4Fe-4S] cluster site. Positions 91-309 constitute a Radical SAM core domain; sequence CFGKGTATFM…EEKAYEMGFT (219 aa).

This sequence belongs to the radical SAM superfamily. Lipoyl synthase family. It depends on [4Fe-4S] cluster as a cofactor.

It localises to the cytoplasm. It carries out the reaction [[Fe-S] cluster scaffold protein carrying a second [4Fe-4S](2+) cluster] + N(6)-octanoyl-L-lysyl-[protein] + 2 oxidized [2Fe-2S]-[ferredoxin] + 2 S-adenosyl-L-methionine + 4 H(+) = [[Fe-S] cluster scaffold protein] + N(6)-[(R)-dihydrolipoyl]-L-lysyl-[protein] + 4 Fe(3+) + 2 hydrogen sulfide + 2 5'-deoxyadenosine + 2 L-methionine + 2 reduced [2Fe-2S]-[ferredoxin]. Its pathway is protein modification; protein lipoylation via endogenous pathway; protein N(6)-(lipoyl)lysine from octanoyl-[acyl-carrier-protein]: step 2/2. In terms of biological role, catalyzes the radical-mediated insertion of two sulfur atoms into the C-6 and C-8 positions of the octanoyl moiety bound to the lipoyl domains of lipoate-dependent enzymes, thereby converting the octanoylated domains into lipoylated derivatives. This is Lipoyl synthase from Ralstonia nicotianae (strain ATCC BAA-1114 / GMI1000) (Ralstonia solanacearum).